Reading from the N-terminus, the 507-residue chain is Cytochrome P450 monooxygenase tpeC (507 aa).

Residues 24–44 (TLAIALIVGFVILKAIYNVFF) form a helical membrane-spanning segment. A heme-binding site is contributed by cysteine 449.

This sequence belongs to the cytochrome P450 family. Heme serves as cofactor.

The protein resides in the membrane. It functions in the pathway secondary metabolite biosynthesis. Cytochrome P450 monooxygenase; part of the gene cluster that mediates the biosynthesis of polyesters containing 2,4-dihydroxy-6-(2-hydroxypropyl)benzoate and 3-hydroxybutyrate moieties, such as talapolyester G, 15G256beta and 15G256beta-2; as well as to oxidized derivatives such as 15G256alpha. The biosynthesis of the polyesters probably starts with the formation of the diketide 3-hydroxybutyryl-S-ACP catalyzed by the partially reducing polyketide synthase tpeA. The acceptance of 3-hydroxybutyryl by the non-reducing polyketide synthase tpeB would initiate further elongation and cyclization, catalyzed by KS and PT, respectively, to form 2,4-dihydroxy-6-(2-hydroxyn-propyl)benzoyl-S-ACP intermediate. The TE domain could catalyze lactonization at this step to yield 6-hydroxymellein as a derailment product. The polyesterification process maybe occurs when additional molecules of 3-hydroxybutyryl are transferred to tpeB. Following the first esterification step, an intramolecular cyclization catalyzed by the TE domain of tpeB would give talarodioxadione 1, whereas the ethyl esterification of talapolyester G perhaps happens spontaneously. Further oxidation by the cytochrome P450 monooxygenase tpeC then leads to the formation of oxidized derivatives. This Talaromyces stipitatus (strain ATCC 10500 / CBS 375.48 / QM 6759 / NRRL 1006) (Penicillium stipitatum) protein is Cytochrome P450 monooxygenase tpeC.